Here is a 460-residue protein sequence, read N- to C-terminus: Indoleacetamide hydrolase (460 aa).

Residues K71 and S146 each act as charge relay system in the active site. S169 (acyl-ester intermediate) is an active-site residue.

It belongs to the amidase family.

It participates in plant hormone metabolism; auxin biosynthesis. Its function is as follows. Hydrolyzes indole-3-acetamide (IAM) into indole-3-acetic acid (IAA). The sequence is that of Indoleacetamide hydrolase (iaaH) from Pantoea agglomerans pv. gypsophilae (Erwinia herbicola).